A 418-amino-acid chain; its full sequence is Tektin-1 (418 aa).

Coiled coils occupy residues 20–107 (NKSQ…SYKE), 134–177 (QELQ…DLKD), 266–308 (NGLK…QQEG), and 332–383 (VAQY…ENTI).

This sequence belongs to the tektin family. In terms of assembly, microtubule inner protein component of sperm flagellar doublet microtubules. Ubiquitinated, leading to its degradation. Deubiquitinated by USP16, promoting its stability. Predominantly expressed in testis.

It is found in the cytoplasm. The protein localises to the cytoskeleton. Its subcellular location is the cilium axoneme. It localises to the flagellum axoneme. Functionally, microtubule inner protein (MIP) part of the dynein-decorated doublet microtubules (DMTs) in cilia and flagellar axoneme. Forms filamentous polymers in the walls of ciliary and flagellar microtubules. This Rattus norvegicus (Rat) protein is Tektin-1 (Tekt1).